The sequence spans 295 residues: Bifunctional protein FolD (295 aa).

Residues 166–168 (GRS), Ser-191, and Ile-232 contribute to the NADP(+) site.

It belongs to the tetrahydrofolate dehydrogenase/cyclohydrolase family. Homodimer.

The catalysed reaction is (6R)-5,10-methylene-5,6,7,8-tetrahydrofolate + NADP(+) = (6R)-5,10-methenyltetrahydrofolate + NADPH. It carries out the reaction (6R)-5,10-methenyltetrahydrofolate + H2O = (6R)-10-formyltetrahydrofolate + H(+). The protein operates within one-carbon metabolism; tetrahydrofolate interconversion. Functionally, catalyzes the oxidation of 5,10-methylenetetrahydrofolate to 5,10-methenyltetrahydrofolate and then the hydrolysis of 5,10-methenyltetrahydrofolate to 10-formyltetrahydrofolate. The protein is Bifunctional protein FolD of Rhodopseudomonas palustris (strain BisB5).